Reading from the N-terminus, the 368-residue chain is MKGVKAEDVHHFLLNTEDLRHRRVSRMVEEVQKILLQVTSDISNRDSRFHCISNAGIHSDSLKVLSPSQFLVTVPLRGLSGFRQKKTRRWRYYSPSGTQLLAPAMEPEKLHQWLEIEQFQKSTPHWHDNDVNIKGDLVPARIIHVFLEHLYRAITFCSLSDKVNVLESYGPSIRLNVETSEQMVEVELVPVVEVPGYWPKKSQWPRFFKRWPLRERVQCVKSFGFDLLARSNYHWQLSFLRGERLLLEAMDDDGGCRMKCYRAVRQMKEDVWCPGNHPVINSQHLQMIFLWASERHPSAKAWKDLGRCFLRIVRRLQKCARQRFLRHYFVRRANLLKYADTAQLDALADKLSRFLQNPSLGQGASSVC.

The protein belongs to the mab-21 family.

The sequence is that of Protein mab-21-like 3 (mab21L3) from Xenopus laevis (African clawed frog).